Here is a 146-residue protein sequence, read N- to C-terminus: MGRFISVSFGLLVLLLSLSGTGANCLPDWSVYEGYCYKVFKERMNWADAEKFCTKQHKDGHLVSFRNSKEVDFVISLAFPMLKNDLVWIGLTDYWRDCNWEWSDGAQLDYKAWDNERHCFIYKNTDNQWTRRDCTWTFSFVCKCPA.

The signal sequence occupies residues 1–23 (MGRFISVSFGLLVLLLSLSGTGA). Disulfide bonds link cysteine 25-cysteine 36, cysteine 53-cysteine 142, and cysteine 119-cysteine 134. Residues 32-143 (YEGYCYKVFK…CTWTFSFVCK (112 aa)) enclose the C-type lectin domain.

The protein belongs to the snaclec family. In terms of assembly, heterodimer of subunits alpha and beta; disulfide-linked. Expressed by the venom gland.

The protein localises to the secreted. Functionally, binding of echicetin to glycoprotein Ibalpha (GP1BA) receptor on platelets alone results in inhibition of platelet aggregation, while binding to both GPIba receptor and IgMk promotes platelet aggregation and signal transduction. The polypeptide is Snaclec echicetin subunit beta (Echis carinatus (Saw-scaled viper)).